We begin with the raw amino-acid sequence, 417 residues long: Dibenzothiophene monooxygenase (417 aa).

FMN is bound by residues Tyr96, 129–134 (NASSEN), 159–163 (KHFCS), Arg282, 369–370 (AR), and His391. The lid loop stretch occupies residues 131–142 (SSENNSHVLDWK).

It belongs to the DszC flavin monooxygenase family. In terms of assembly, homotetramer. Homodimer. Requires FAD as cofactor. The cofactor is NADH.

Its subcellular location is the cytoplasm. It catalyses the reaction dibenzothiophene + 2 FMNH2 + 2 O2 = dibenzothiophene 5,5-dioxide + 2 FMN + 2 H2O + 2 H(+). The enzyme catalyses dibenzothiophene + FMNH2 + O2 = dibenzothiophene 5-oxide + FMN + H2O + H(+). It carries out the reaction dibenzothiophene 5-oxide + FMNH2 + O2 = dibenzothiophene 5,5-dioxide + FMN + H2O + H(+). It functions in the pathway sulfur metabolism; dibenzothiophene degradation. In terms of biological role, catalyzes the first step of the '4S' desulfurization pathway that removes covalently bound sulfur from dibenzothiophene (DBT) without breaking carbon-carbon bonds. Sulfur dioxygenase which converts DBT to DBT-sulfone (DBTO2 or DBT 5,5-dioxide) in a stepwise manner. In DBTO (dibenzothiophene-5-oxide) was reported not to be a substrate, in it is reported to be a substrate. Can also use benzyl sulfide and benzyl sulfoxide as substrates, although benzyl sulfoxide is a poor substrate. The pathway substrate specificity has been augmented using mutagenesis, however no mutations allowed use of alkylated thiophenes. In Rhodococcus qingshengii, this protein is Dibenzothiophene monooxygenase.